The chain runs to 174 residues: NADH-ubiquinone oxidoreductase chain 6 (174 aa).

A run of 5 helical transmembrane segments spans residues 1-21 (MTYV…GFSS), 24-44 (SPIY…GIVL), 46-66 (FGGS…MLVV), 86-106 (VMIL…VVYM), and 151-171 (WLMV…IEIT).

Belongs to the complex I subunit 6 family. Core subunit of respiratory chain NADH dehydrogenase (Complex I) which is composed of 45 different subunits.

Its subcellular location is the mitochondrion inner membrane. The enzyme catalyses a ubiquinone + NADH + 5 H(+)(in) = a ubiquinol + NAD(+) + 4 H(+)(out). Functionally, core subunit of the mitochondrial membrane respiratory chain NADH dehydrogenase (Complex I) which catalyzes electron transfer from NADH through the respiratory chain, using ubiquinone as an electron acceptor. Essential for the catalytic activity and assembly of complex I. This chain is NADH-ubiquinone oxidoreductase chain 6 (MT-ND6), found in Oryctolagus cuniculus (Rabbit).